The sequence spans 128 residues: Small ribosomal subunit protein eS8 (128 aa).

The interval 1–41 (MSYYQGNDSRKITGGQKGKNRDKRKYELGSPPTETKISDKD) is disordered.

The protein belongs to the eukaryotic ribosomal protein eS8 family. Part of the 30S ribosomal subunit.

The sequence is that of Small ribosomal subunit protein eS8 from Sulfolobus acidocaldarius (strain ATCC 33909 / DSM 639 / JCM 8929 / NBRC 15157 / NCIMB 11770).